The following is a 218-amino-acid chain: Mitochondrial fission factor (218 aa).

At 1-198 (MAEISRIQYE…ENKERAKREM (198 aa)) the chain is on the cytoplasmic side. The residue at position 89 (Thr89) is a Phosphothreonine. Ser129, Ser131, Ser146, and Ser171 each carry phosphoserine. Residues 167–198 (VDAASLRRQIIKLNRRLQLLEEENKERAKREM) adopt a coiled-coil conformation. Residues 199–216 (VMYSITVAFWLLNSWLWF) form a helical; Anchor for type IV membrane protein membrane-spanning segment. Residues 217–218 (RR) are Mitochondrial intermembrane-facing.

The protein belongs to the Tango11 family. In terms of assembly, homodimer. Interacts with DNM1L. Interacts with C11orf65/MFI; the interaction inhibits MFF interaction with DNM1L.

It localises to the mitochondrion outer membrane. The protein localises to the peroxisome. It is found in the cytoplasmic vesicle. The protein resides in the secretory vesicle. Its subcellular location is the synaptic vesicle. Functionally, plays a role in mitochondrial and peroxisomal fission. Promotes the recruitment and association of the fission mediator dynamin-related protein 1 (DNM1L) to the mitochondrial surface. May be involved in regulation of synaptic vesicle membrane dynamics by recruitment of DNM1L to clathrin-containing vesicles. This is Mitochondrial fission factor (MFF) from Bos taurus (Bovine).